The chain runs to 308 residues: tRNA-cytidine(32) 2-sulfurtransferase (308 aa).

Residues 39–44 (SGGKDS) carry the PP-loop motif motif. Residues C114, C117, and C205 each coordinate [4Fe-4S] cluster.

The protein belongs to the TtcA family. As to quaternary structure, homodimer. The cofactor is Mg(2+). [4Fe-4S] cluster is required as a cofactor.

It is found in the cytoplasm. The enzyme catalyses cytidine(32) in tRNA + S-sulfanyl-L-cysteinyl-[cysteine desulfurase] + AH2 + ATP = 2-thiocytidine(32) in tRNA + L-cysteinyl-[cysteine desulfurase] + A + AMP + diphosphate + H(+). It functions in the pathway tRNA modification. Its function is as follows. Catalyzes the ATP-dependent 2-thiolation of cytidine in position 32 of tRNA, to form 2-thiocytidine (s(2)C32). The sulfur atoms are provided by the cysteine/cysteine desulfurase (IscS) system. This is tRNA-cytidine(32) 2-sulfurtransferase from Cupriavidus taiwanensis (strain DSM 17343 / BCRC 17206 / CCUG 44338 / CIP 107171 / LMG 19424 / R1) (Ralstonia taiwanensis (strain LMG 19424)).